Reading from the N-terminus, the 397-residue chain is MGKAKFERTKPHVNIGTIGHVDHGKTTLTAAISKVLADKYPSATNVQRDFASIDSAPEERQRGITINISHVEYETPKRHYAHVDAPGHADYIKNMITGAAQMDGAILVVAATDGPMAQTREHVLLAKQVGVPYLLVALNKSDMVDDEEILELVELEVRELLSSQDFDGDNAPVVQVSGLKALEGDEKWVEQIVKLMDAVDESIPEPVRDKDKPFLMPVEDVFTITGRGTVVTGRAERGTLAINSDVEIVGIRPTVKTTVTGIEMFHKQLDEAWAGENCGLLLRGTKREDVERGQVIVKPGSVTPHTDFEGTAYILSKEEGGRHNPFYANYRPQFYFRTTDVTGVITLPEGTEMVMPGDTTDMNVALIQPIAMEEGLGFAIREGGRTVGAGTVTKIVK.

One can recognise a tr-type G domain in the interval 10 to 207; it reads KPHVNIGTIG…AVDESIPEPV (198 aa). The interval 19–26 is G1; sequence GHVDHGKT. 19–26 serves as a coordination point for GTP; the sequence is GHVDHGKT. T26 lines the Mg(2+) pocket. Positions 63–67 are G2; sequence GITIN. Residues 84-87 are G3; it reads DAPG. GTP contacts are provided by residues 84 to 88 and 139 to 142; these read DAPGH and NKSD. A G4 region spans residues 139–142; it reads NKSD. Positions 177–179 are G5; it reads SGL.

Belongs to the TRAFAC class translation factor GTPase superfamily. Classic translation factor GTPase family. EF-Tu/EF-1A subfamily. Monomer.

The protein resides in the cytoplasm. The enzyme catalyses GTP + H2O = GDP + phosphate + H(+). Functionally, GTP hydrolase that promotes the GTP-dependent binding of aminoacyl-tRNA to the A-site of ribosomes during protein biosynthesis. The chain is Elongation factor Tu from Clavibacter michiganensis subsp. michiganensis (strain NCPPB 382).